The chain runs to 135 residues: Large ribosomal subunit protein uL16c (135 aa).

Belongs to the universal ribosomal protein uL16 family. Part of the 50S ribosomal subunit.

It is found in the plastid. Its subcellular location is the chloroplast. This is Large ribosomal subunit protein uL16c from Panax ginseng (Korean ginseng).